A 386-amino-acid polypeptide reads, in one-letter code: GTPase Obg (386 aa).

The Obg domain maps to 1–159 (MKFVDEAVIR…RSLKLELMLL (159 aa)). The 174-residue stretch at 160-333 (ADVGLLGMPN…LSLKLVDFID (174 aa)) folds into the OBG-type G domain. GTP is bound by residues 166-173 (GMPNAGKS), 191-195 (FTTLV), 213-216 (DIPG), 283-286 (NKKD), and 314-316 (SAY). The Mg(2+) site is built by Ser-173 and Thr-193. The interval 356 to 375 (KDSDSLNEDFDDSDDDDFDD) is disordered. Over residues 360–375 (SLNEDFDDSDDDDFDD) the composition is skewed to acidic residues.

This sequence belongs to the TRAFAC class OBG-HflX-like GTPase superfamily. OBG GTPase family. In terms of assembly, monomer. It depends on Mg(2+) as a cofactor.

Its subcellular location is the cytoplasm. Its function is as follows. An essential GTPase which binds GTP, GDP and possibly (p)ppGpp with moderate affinity, with high nucleotide exchange rates and a fairly low GTP hydrolysis rate. Plays a role in control of the cell cycle, stress response, ribosome biogenesis and in those bacteria that undergo differentiation, in morphogenesis control. The protein is GTPase Obg of Shewanella sediminis (strain HAW-EB3).